Consider the following 212-residue polypeptide: MSELSDIRREYTLGELHSEDVPNDPMDLFNAWLEVVRDSQIQDPTAMSVATVDENGQPFQRIVLLKRFGDDGFVFFTNLESRKAQHIANNAQVSILFPWHSIDKQVAVTGIAEPLSKTEVLKYFMSRPKESQIAAWVSKQSSPISARKALETKFAEMKAKFSKGDVPLPKFWGGYLVRPKSIEFWQGGEHRLHDRFIYTKVGDDWVRSRLAP.

Substrate contacts are provided by residues 8–11 (RREY) and K66. Residues 61-66 (RIVLLK), 76-77 (FT), R82, K83, and Q105 each bind FMN. The substrate site is built by Y123, R127, and S131. FMN contacts are provided by residues 140-141 (QS) and W185. Residue 191 to 193 (RLH) participates in substrate binding. R195 provides a ligand contact to FMN.

It belongs to the pyridoxamine 5'-phosphate oxidase family. As to quaternary structure, homodimer. The cofactor is FMN.

It carries out the reaction pyridoxamine 5'-phosphate + O2 + H2O = pyridoxal 5'-phosphate + H2O2 + NH4(+). The catalysed reaction is pyridoxine 5'-phosphate + O2 = pyridoxal 5'-phosphate + H2O2. The protein operates within cofactor metabolism; pyridoxal 5'-phosphate salvage; pyridoxal 5'-phosphate from pyridoxamine 5'-phosphate: step 1/1. It functions in the pathway cofactor metabolism; pyridoxal 5'-phosphate salvage; pyridoxal 5'-phosphate from pyridoxine 5'-phosphate: step 1/1. Catalyzes the oxidation of either pyridoxine 5'-phosphate (PNP) or pyridoxamine 5'-phosphate (PMP) into pyridoxal 5'-phosphate (PLP). The chain is Pyridoxine/pyridoxamine 5'-phosphate oxidase from Shewanella halifaxensis (strain HAW-EB4).